The chain runs to 114 residues: UPF0102 protein Amet_2739 (114 aa).

This sequence belongs to the UPF0102 family.

The sequence is that of UPF0102 protein Amet_2739 from Alkaliphilus metalliredigens (strain QYMF).